Consider the following 121-residue polypeptide: Large ribosomal subunit protein bL17 (121 aa).

The protein belongs to the bacterial ribosomal protein bL17 family. In terms of assembly, part of the 50S ribosomal subunit. Contacts protein L32.

The protein is Large ribosomal subunit protein bL17 of Mycoplasmopsis agalactiae (strain NCTC 10123 / CIP 59.7 / PG2) (Mycoplasma agalactiae).